The following is a 247-amino-acid chain: DNA polymerase sliding clamp (247 aa).

This sequence belongs to the PCNA family. As to quaternary structure, homotrimer. The subunits circularize to form a toroid; DNA passes through its center. Replication factor C (RFC) is required to load the toroid on the DNA.

Sliding clamp subunit that acts as a moving platform for DNA processing. Responsible for tethering the catalytic subunit of DNA polymerase and other proteins to DNA during high-speed replication. The polypeptide is DNA polymerase sliding clamp (Methanoculleus marisnigri (strain ATCC 35101 / DSM 1498 / JR1)).